The primary structure comprises 895 residues: Ras and Rab interactor 2 (895 aa).

The 94-residue stretch at 97-190 folds into the SH2 domain; it reads WLQLSLSEEE…VLPFTLKLPY (94 aa). Residues 284–361 are disordered; it reads LSGGLKRPST…KPTPIPPPRL (78 aa). The span at 306-315 shows a compositional bias: pro residues; the sequence is SPPPRPPPPA. Residues 328-338 are compositionally biased toward polar residues; sequence TETQTSMPETV. S366 is modified (phosphoserine). Disordered regions lie at residues 373-442 and 460-481; these read GAKT…SDSL and SLED…KSKK. Low complexity predominate over residues 430 to 441; the sequence is SDMSISTSSSDS. Phosphoserine is present on S501. Position 509 is a phosphothreonine (T509). Positions 618 to 757 constitute a VPS9 domain; that stretch reads DGSWKQLKEN…IKNFQEEQAA (140 aa). A Ras-associating domain is found at 787–878; sequence FQNYLRVAFQ…FHFVYKRIKN (92 aa).

It belongs to the RIN (Ras interaction/interference) family. In terms of assembly, homotetramer; probably composed of anti-parallel linkage of two parallel dimers. Interacts with Ras. Interacts with RAB5B, with a much higher affinity for GTP-bound activated RAB5B. Does not interact with other members of the Rab family. Widely expressed. Expressed in heart, kidney, lung placenta. Expressed at low level in skeletal muscle, spleen and peripheral blood.

The protein resides in the cytoplasm. In terms of biological role, ras effector protein. May function as an upstream activator and/or downstream effector for RAB5B in endocytic pathway. May function as a guanine nucleotide exchange (GEF) of RAB5B, required for activating the RAB5 proteins by exchanging bound GDP for free GTP. In Homo sapiens (Human), this protein is Ras and Rab interactor 2 (RIN2).